We begin with the raw amino-acid sequence, 643 residues long: 1-deoxy-D-xylulose-5-phosphate synthase (643 aa).

Residues H78 and 119 to 121 (AHS) each bind thiamine diphosphate. Mg(2+) is bound at residue D150. Thiamine diphosphate contacts are provided by residues 151 to 152 (GS), N179, Y288, and E370. Mg(2+) is bound at residue N179.

The protein belongs to the transketolase family. DXPS subfamily. As to quaternary structure, homodimer. The cofactor is Mg(2+). Thiamine diphosphate is required as a cofactor.

The catalysed reaction is D-glyceraldehyde 3-phosphate + pyruvate + H(+) = 1-deoxy-D-xylulose 5-phosphate + CO2. The protein operates within metabolic intermediate biosynthesis; 1-deoxy-D-xylulose 5-phosphate biosynthesis; 1-deoxy-D-xylulose 5-phosphate from D-glyceraldehyde 3-phosphate and pyruvate: step 1/1. In terms of biological role, catalyzes the acyloin condensation reaction between C atoms 2 and 3 of pyruvate and glyceraldehyde 3-phosphate to yield 1-deoxy-D-xylulose-5-phosphate (DXP). The chain is 1-deoxy-D-xylulose-5-phosphate synthase from Brucella abortus (strain S19).